Here is a 2549-residue protein sequence, read N- to C-terminus: Serine/threonine-protein kinase mTOR (2549 aa).

Methionine 1 carries the post-translational modification N-acetylmethionine. The interaction with NBN stretch occupies residues 1 to 651; sequence MLGTGPAAAT…HVVSQTAVQV (651 aa). HEAT repeat units follow at residues 16-53, 55-99, 100-137, 138-179, 180-220, 222-276, 277-313, 314-364, 365-409, 410-445, 446-494, 495-529, 530-563, 564-596, 597-636, 637-683, 686-724, 727-766, 769-811, 814-853, 857-893, 894-942, 943-988, 989-1027, 1029-1068, 1069-1105, 1106-1144, 1145-1188, 1189-1225, 1226-1273, 1274-1311, and 1312-1345; these read SSNV…MELR, MSQE…VEGG, NATR…AMAG, DTFT…AISV, PTFF…LILT, QREP…RISS, MEGE…PRHI, TPFT…CCRD, LMEE…AFTD, TQYL…VAVR, SEFK…RAMG, PGIQ…RQIP, QLKK…GLAH, QLAS…EFEG, HSLT…SIHL, ISGH…DERF, HLAQ…MNPA, MPFL…NAPR, RPYM…VSGL, RKWV…STGY, PYRK…LLGA, LDPY…GNLP, LDEF…KCVQ, FLPQ…KSHI, PYMD…GEFK, LYLP…LFGA, NLDD…RLTE, SLDF…GKKY, QIFI…LADE, EEDP…GAAR, RVSK…QAYN, and PMAR…ELAL. A Phosphoserine modification is found at serine 567. A Phosphothreonine modification is found at threonine 1162. An N6-acetyllysine modification is found at lysine 1218. Serine 1261 is modified (phosphoserine). TPR repeat units follow at residues 1346–1382, 1383–1408, 1409–1442, 1443–1473, 1474–1507, 1508–1541, 1542–1574, 1575–1614, 1615–1649, 1650–1693, 1694–1731, 1732–1786, 1787–1846, 1898–1930, 1931–1970, and 1971–2005; these read TSQD…GIVL, LGER…QKGP, TPAI…HFGE, LEIQ…NKDD, PELM…VNDE, TQAK…RDTH, DGAF…LDAE, LTAM…RREI, IRQI…PHED, MRTW…PTVH, PQVT…AQHA, IATE…DRSW, YKAW…STEG, NNLQ…VKAI, QIDT…YHPQ, and ALIY…SNTL. One can recognise an FAT domain in the interval 1382–1982; sequence LLGERAAKCR…IYPLTVASKS (601 aa). 1D-myo-inositol hexakisphosphate-binding residues include lysine 1662, lysine 1702, and arginine 1749. The tract at residues 1812-1867 is disordered; that stretch reads DEKKKLRHASGANITNATTAATTAATATTTASTEGSNSESEAESTENSPTPSPLQK. Residues 1820-1860 show a composition bias toward low complexity; it reads ASGANITNATTAATTAATATTTASTEGSNSESEAESTENSP. A sufficient for interaction with the FKBP1A/rapamycin complex region spans residues 2012-2144; sequence VSEELIRVAI…DLELAVPGTY (133 aa). Lysine 2066 participates in a covalent cross-link: Glycyl lysine isopeptide (Lys-Gly) (interchain with G-Cter in ubiquitin). Residues 2156–2469 form the PI3K/PI4K catalytic domain; that stretch reads IAPSLQVITS…GVELGEPAHK (314 aa). Serine 2159 carries the post-translational modification Phosphoserine; by TBK1. Residues 2162–2168 are G-loop; that stretch reads VITSKQR. Residue threonine 2164 is modified to Phosphothreonine. Serine 2165 and glutamine 2167 together coordinate ATP. Residue threonine 2173 is modified to Phosphothreonine; by PKB/AKT1. 8 residues coordinate ATP: leucine 2185, lysine 2187, glutamate 2190, tyrosine 2225, glycine 2238, tryptophan 2239, valine 2240, and threonine 2245. The tract at residues 2258–2296 is interaction with MLST8; it reads KILLNIEHRIMLRMAPDYDHLTLMQKVEVFEHAVNNTAG. The tract at residues 2335-2343 is catalytic loop; that stretch reads GLGDRHPSN. Asparagine 2343 contacts Mg(2+). Residues methionine 2345 and isoleucine 2356 each coordinate ATP. The tract at residues 2355–2380 is activation loop; it reads HIDFGDCFEVAMTREKFPEKIPFRLT. Aspartate 2357 contributes to the Mg(2+) binding site. The residue at position 2446 (threonine 2446) is a Phosphothreonine; by RPS6KB1. Position 2448 is a phosphoserine; by RPS6KB1 (serine 2448). At serine 2478 the chain carries Phosphoserine. Position 2481 is a phosphoserine; by autocatalysis (serine 2481). Positions 2517–2549 constitute an FATC domain; that stretch reads DTLDVPTQVELLIKQATSHENLCQCYIGWCPFW.

This sequence belongs to the PI3/PI4-kinase family. As to quaternary structure, part of the mechanistic target of rapamycin complex 1 (mTORC1) which contains MTOR, MLST8 and RPTOR. The mTORC1 complex is a 1 Md obligate dimer of two stoichiometric heterotetramers with overall dimensions of 290 A x 210 A x 135 A. It has a rhomboid shape and a central cavity, the dimeric interfaces are formed by interlocking interactions between the two MTOR and the two RPTOR subunits. The MLST8 subunit forms distal foot-like protuberances, and contacts only one MTOR within the complex, while the small AKT1S1/PRAS40 localizes to the midsection of the central core, in close proximity to RPTOR. mTORC1 associates with AKT1S1/PRAS40, which inhibits its activity by blocking MTOR substrate-recruitment site. Component of the mechanistic target of rapamycin complex 2 (mTORC2), consisting in two heterotretramers composed of MTOR, MLST8, RICTOR and MAPKAP1/SIN1. Interacts with PLPP7 and PML. Interacts with PRR5 and RICTOR; the interaction is direct within the mTORC2 complex and interaction with RICTOR is enhanced by deubiquitination of RICTOR by USP9X. mTORC1 and mTORC2 associate with DEPTOR, which regulates their activity. Interacts with WAC; WAC positively regulates MTOR activity by promoting the assembly of the TTT complex composed of TELO2, TTI1 and TTI2 and the RUVBL complex composed of RUVBL1 and RUVBL2 into the TTT-RUVBL complex which leads to the dimerization of the mTORC1 complex and its subsequent activation. Interacts with UBQLN1. Interacts with TTI1 and TELO2. Interacts with CLIP1; phosphorylates and regulates CLIP1. Interacts with NBN. Interacts with HTR6. Interacts with BRAT1. Interacts with MEAK7 (via C-terminal domain); the interaction increases upon nutrient stimulation. Interacts with TM4SF5; the interaction is positively regulated by arginine and is negatively regulated by leucine. Interacts with GPR137B. Interacts with NCKAP1L. Interacts with TPCN1 and TPCN2; the interaction is required for TPCN1 and TPCN2 sensitivity to ATP. Interacts with ATP6V1A and with CRYAB, forming a ternary complex. Interacts with SLC38A7; this interaction mediates the recruitment of mTORC1 to the lysosome and its subsequent activation. Interacts with TSPAN8. Autophosphorylates when part of mTORC1 or mTORC2. Phosphorylation at Ser-1261, Ser-2159 and Thr-2164 promotes autophosphorylation. Phosphorylated at Ser-2448 by RPS6KB1. Phosphorylation in the kinase domain modulates the interactions of MTOR with RPTOR and AKT1S1/PRAS40 and leads to increased intrinsic mTORC1 kinase activity. Phosphorylation at Ser-2159 by TBK1 in response to growth factors and pathogen recognition receptors promotes mTORC1 activity. Phosphorylation at Ser-2159 by TBK1 in response to EGF growth factor promotes mTORC2 activity, leading to AKT1 phosphorylation and activation. Phosphorylation at Thr-2173 in the ATP-binding region by AKT1 strongly reduces kinase activity. Post-translationally, ubiquitinated at Lys-2066 by the SCF(FBXO22) complex via 'Lys-27'-linked ubiquitination prevents mTORC1 substrate recruitment. Expressed in numerous tissues, with highest levels in testis.

The protein resides in the lysosome membrane. It is found in the endoplasmic reticulum membrane. Its subcellular location is the golgi apparatus membrane. It localises to the cell membrane. The protein localises to the mitochondrion outer membrane. The protein resides in the cytoplasm. It is found in the nucleus. Its subcellular location is the PML body. It localises to the microsome membrane. The protein localises to the cytoplasmic vesicle. The protein resides in the phagosome. It carries out the reaction L-seryl-[protein] + ATP = O-phospho-L-seryl-[protein] + ADP + H(+). The catalysed reaction is L-threonyl-[protein] + ATP = O-phospho-L-threonyl-[protein] + ADP + H(+). The enzyme catalyses L-tyrosyl-[protein] + ATP = O-phospho-L-tyrosyl-[protein] + ADP + H(+). The mTORC1 complex is activated in response to nutrients, growth factors or amino acids: activation requires relocalization of the mTORC1 complex to lysosomes that is mediated by the Ragulator complex, SLC38A9, and the Rag GTPases RagA/RRAGA, RagB/RRAGB, RagC/RRAGC and RagD/RRAGD. Activation of mTORC1 by growth factors such as insulin involves AKT1-mediated phosphorylation of TSC1-TSC2, which leads to the activation of the RHEB GTPase a potent activator of the protein kinase activity of mTORC1. Insulin-stimulated and amino acid-dependent phosphorylation at Ser-1261 promotes autophosphorylation and the activation of mTORC1. On the other hand, low cellular energy levels can inhibit mTORC1 through activation of PRKAA1 while hypoxia inhibits mTORC1 through a REDD1-dependent mechanism which may also require PRKAA1. The kinase activity of MTOR within the mTORC1 complex is positively regulated by MLST8. The kinase activity of MTOR is inhibited by DEPTOR and AKT1S1. The non-canonical mTORC1 complex is independent of the RHEB GTPase and specifically mediates phosphorylation of MiT/TFE factors TFEB and TFE3 but not other mTORC1 substrates: it is activated by FLCN, which activates Rag GTPases RagC/RRAGC and RagD/RRAGD. MTOR is the target of the immunosuppressive and anti-cancer drug rapamycin which acts in complex with FKBP1A/FKBP12, and specifically inhibits its kinase activity. mTORC2 is also activated by growth factors, but seems to be nutrient-insensitive. mTORC2 associates and is directly activated by ribosomes. mTORC2 may also be regulated by RHEB but in an indirect manner through the PI3K signaling pathway. In terms of biological role, serine/threonine protein kinase which is a central regulator of cellular metabolism, growth and survival in response to hormones, growth factors, nutrients, energy and stress signals. MTOR directly or indirectly regulates the phosphorylation of at least 800 proteins. Functions as part of 2 structurally and functionally distinct signaling complexes mTORC1 and mTORC2 (mTOR complex 1 and 2). In response to nutrients, growth factors or amino acids, mTORC1 is recruited to the lysosome membrane and promotes protein, lipid and nucleotide synthesis by phosphorylating key regulators of mRNA translation and ribosome synthesis. This includes phosphorylation of EIF4EBP1 and release of its inhibition toward the elongation initiation factor 4E (eiF4E). Moreover, phosphorylates and activates RPS6KB1 and RPS6KB2 that promote protein synthesis by modulating the activity of their downstream targets including ribosomal protein S6, eukaryotic translation initiation factor EIF4B, and the inhibitor of translation initiation PDCD4. Stimulates the pyrimidine biosynthesis pathway, both by acute regulation through RPS6KB1-mediated phosphorylation of the biosynthetic enzyme CAD, and delayed regulation, through transcriptional enhancement of the pentose phosphate pathway which produces 5-phosphoribosyl-1-pyrophosphate (PRPP), an allosteric activator of CAD at a later step in synthesis, this function is dependent on the mTORC1 complex. Regulates ribosome synthesis by activating RNA polymerase III-dependent transcription through phosphorylation and inhibition of MAF1 an RNA polymerase III-repressor. Activates dormant ribosomes by mediating phosphorylation of SERBP1, leading to SERBP1 inactivation and reactivation of translation. In parallel to protein synthesis, also regulates lipid synthesis through SREBF1/SREBP1 and LPIN1. To maintain energy homeostasis mTORC1 may also regulate mitochondrial biogenesis through regulation of PPARGC1A. In the same time, mTORC1 inhibits catabolic pathways: negatively regulates autophagy through phosphorylation of ULK1. Under nutrient sufficiency, phosphorylates ULK1 at 'Ser-758', disrupting the interaction with AMPK and preventing activation of ULK1. Also prevents autophagy through phosphorylation of the autophagy inhibitor DAP. Also prevents autophagy by phosphorylating RUBCNL/Pacer under nutrient-rich conditions. Prevents autophagy by mediating phosphorylation of AMBRA1, thereby inhibiting AMBRA1 ability to mediate ubiquitination of ULK1 and interaction between AMBRA1 and PPP2CA. mTORC1 exerts a feedback control on upstream growth factor signaling that includes phosphorylation and activation of GRB10 a INSR-dependent signaling suppressor. Among other potential targets mTORC1 may phosphorylate CLIP1 and regulate microtubules. The mTORC1 complex is inhibited in response to starvation and amino acid depletion. The non-canonical mTORC1 complex, which acts independently of RHEB, specifically mediates phosphorylation of MiT/TFE factors MITF, TFEB and TFE3 in the presence of nutrients, promoting their cytosolic retention and inactivation. Upon starvation or lysosomal stress, inhibition of mTORC1 induces dephosphorylation and nuclear translocation of TFEB and TFE3, promoting their transcription factor activity. The mTORC1 complex regulates pyroptosis in macrophages by promoting GSDMD oligomerization. MTOR phosphorylates RPTOR which in turn inhibits mTORC1. As part of the mTORC2 complex, MTOR transduces signals from growth factors to pathways involved in proliferation, cytoskeletal organization, lipogenesis and anabolic output. In response to growth factors, mTORC2 phosphorylates and activates AGC protein kinase family members, including AKT (AKT1, AKT2 and AKT3), PKC (PRKCA, PRKCB and PRKCE) and SGK1. In contrast to mTORC1, mTORC2 is nutrient-insensitive. mTORC2 plays a critical role in AKT1 activation by mediating phosphorylation of different sites depending on the context, such as 'Thr-450', 'Ser-473', 'Ser-477' or 'Thr-479', facilitating the phosphorylation of the activation loop of AKT1 on 'Thr-308' by PDPK1/PDK1 which is a prerequisite for full activation. mTORC2 also regulates the phosphorylation of SGK1 at 'Ser-422'. mTORC2 may regulate the actin cytoskeleton, through phosphorylation of PRKCA, PXN and activation of the Rho-type guanine nucleotide exchange factors RHOA and RAC1A or RAC1B. The mTORC2 complex also phosphorylates various proteins involved in insulin signaling, such as FBXW8 and IGF2BP1. May also regulate insulin signaling by acting as a tyrosine protein kinase that catalyzes phosphorylation of IGF1R and INSR; additional evidence are however required to confirm this result in vivo. Regulates osteoclastogenesis by adjusting the expression of CEBPB isoforms. Plays an important regulatory role in the circadian clock function; regulates period length and rhythm amplitude of the suprachiasmatic nucleus (SCN) and liver clocks. In Homo sapiens (Human), this protein is Serine/threonine-protein kinase mTOR.